The primary structure comprises 343 residues: Dipeptide transport system permease protein DppC (343 aa).

The next 5 helical transmembrane spans lie at leucine 44–valine 64, leucine 144–isoleucine 164, leucine 195–tryptophan 215, glycine 259–leucine 279, and phenylalanine 309–glycine 329. In terms of domain architecture, ABC transmembrane type-1 spans leucine 140–glycine 329.

The protein belongs to the binding-protein-dependent transport system permease family. OppBC subfamily. The complex is composed of two ATP-binding proteins (DppD and DppF), two transmembrane proteins (DppB and DppC) and a solute-binding protein (DppA).

The protein localises to the cell membrane. Part of the ABC transporter DppABCDF involved in dipeptide transport. Responsible for the translocation of the substrate across the membrane. This Lactococcus lactis subsp. cremoris (strain MG1363) protein is Dipeptide transport system permease protein DppC.